The following is a 344-amino-acid chain: 3-isopropylmalate dehydrogenase (344 aa).

Residues Arg93, Arg103, Arg131, and Asp215 each contribute to the substrate site. The Mg(2+) site is built by Asp215, Asp239, and Asp243. 273-285 is a binding site for NAD(+); sequence GSAPDIAGKGIAN.

The protein belongs to the isocitrate and isopropylmalate dehydrogenases family. LeuB type 1 subfamily. As to quaternary structure, homodimer. It depends on Mg(2+) as a cofactor. Mn(2+) serves as cofactor.

Its subcellular location is the cytoplasm. The enzyme catalyses (2R,3S)-3-isopropylmalate + NAD(+) = 4-methyl-2-oxopentanoate + CO2 + NADH. Its pathway is amino-acid biosynthesis; L-leucine biosynthesis; L-leucine from 3-methyl-2-oxobutanoate: step 3/4. Its function is as follows. Catalyzes the oxidation of 3-carboxy-2-hydroxy-4-methylpentanoate (3-isopropylmalate) to 3-carboxy-4-methyl-2-oxopentanoate. The product decarboxylates to 4-methyl-2 oxopentanoate. The protein is 3-isopropylmalate dehydrogenase of Streptococcus mutans serotype c (strain ATCC 700610 / UA159).